Reading from the N-terminus, the 748-residue chain is LPS-assembly protein LptD (748 aa).

An N-terminal signal peptide occupies residues 1–19 (MSKTWGILMLSVLSAPSLA).

Belongs to the LptD family. Component of the lipopolysaccharide transport and assembly complex. Interacts with LptE and LptA.

The protein resides in the cell outer membrane. Together with LptE, is involved in the assembly of lipopolysaccharide (LPS) at the surface of the outer membrane. In Pseudoalteromonas translucida (strain TAC 125), this protein is LPS-assembly protein LptD.